Reading from the N-terminus, the 106-residue chain is uncharacterized protein (106 aa).

Belongs to the HesB/IscA family.

This is an uncharacterized protein from Bradyrhizobium diazoefficiens (strain JCM 10833 / BCRC 13528 / IAM 13628 / NBRC 14792 / USDA 110).